A 361-amino-acid polypeptide reads, in one-letter code: Chorismate synthase (361 aa).

2 residues coordinate NADP(+): arginine 48 and arginine 54. FMN contacts are provided by residues 131 to 133 (RSS), 243 to 244 (NA), glycine 287, 302 to 306 (KPTSS), and arginine 328.

It belongs to the chorismate synthase family. As to quaternary structure, homotetramer. FMNH2 is required as a cofactor.

The enzyme catalyses 5-O-(1-carboxyvinyl)-3-phosphoshikimate = chorismate + phosphate. It participates in metabolic intermediate biosynthesis; chorismate biosynthesis; chorismate from D-erythrose 4-phosphate and phosphoenolpyruvate: step 7/7. In terms of biological role, catalyzes the anti-1,4-elimination of the C-3 phosphate and the C-6 proR hydrogen from 5-enolpyruvylshikimate-3-phosphate (EPSP) to yield chorismate, which is the branch point compound that serves as the starting substrate for the three terminal pathways of aromatic amino acid biosynthesis. This reaction introduces a second double bond into the aromatic ring system. The chain is Chorismate synthase from Bradyrhizobium sp. (strain BTAi1 / ATCC BAA-1182).